The sequence spans 350 residues: Ribosome production factor 2 homolog (350 aa).

The Brix domain occupies 28-266 (KTCLFLRGTT…LGRMREPDPA (239 aa)). Over residues 192 to 202 (PTSSTSTNNDG) the composition is skewed to polar residues. Disordered stretches follow at residues 192–219 (PTSSTSTNNDGENPAPLPGMTDPRSIDP) and 301–350 (MGKT…KVKG).

The protein belongs to the RPF2 family. In terms of assembly, component of a hexameric 5S RNP precursor complex, composed of 5S RNA, RRS1, RPF2, RPL5, RPL11 and SYO1; this complex acts as a precursor for ribosome assembly.

It is found in the nucleus. It localises to the nucleolus. Its function is as follows. Involved in ribosomal large subunit assembly. The polypeptide is Ribosome production factor 2 homolog (Chaetomium thermophilum (strain DSM 1495 / CBS 144.50 / IMI 039719) (Thermochaetoides thermophila)).